Consider the following 160-residue polypeptide: SsrA-binding protein (160 aa).

Positions 131–160 (KKEYDKRDTERERDAGRELQRAVRNKGKED) are disordered.

Belongs to the SmpB family.

Its subcellular location is the cytoplasm. Functionally, required for rescue of stalled ribosomes mediated by trans-translation. Binds to transfer-messenger RNA (tmRNA), required for stable association of tmRNA with ribosomes. tmRNA and SmpB together mimic tRNA shape, replacing the anticodon stem-loop with SmpB. tmRNA is encoded by the ssrA gene; the 2 termini fold to resemble tRNA(Ala) and it encodes a 'tag peptide', a short internal open reading frame. During trans-translation Ala-aminoacylated tmRNA acts like a tRNA, entering the A-site of stalled ribosomes, displacing the stalled mRNA. The ribosome then switches to translate the ORF on the tmRNA; the nascent peptide is terminated with the 'tag peptide' encoded by the tmRNA and targeted for degradation. The ribosome is freed to recommence translation, which seems to be the essential function of trans-translation. The sequence is that of SsrA-binding protein from Pseudomonas fluorescens (strain Pf0-1).